The following is a 229-amino-acid chain: Adenine nucleotide translocase lysine N-methyltransferase (229 aa).

The segment at 1-22 (MDQDDPAEALTELREKRLGLLE) is N-terminal sequence (NTS). A helical membrane pass occupies residues 20–42 (LLEIVQAAAGSGLAVYTIWALLL). Residues 43–77 (QPGFRRVPLRLQVPYVGASARQVENVLSLLRGRPG) form a methyltransferase (MTase) region. The interval 43–77 (QPGFRRVPLRLQVPYVGASARQVENVLSLLRGRPG) is pre-methyltransferase (preMT).

It belongs to the ANT/ATPSC lysine N-methyltransferase family.

Its subcellular location is the mitochondrion membrane. The catalysed reaction is L-lysyl-[protein] + 3 S-adenosyl-L-methionine = N(6),N(6),N(6)-trimethyl-L-lysyl-[protein] + 3 S-adenosyl-L-homocysteine + 3 H(+). Mitochondrial protein-lysine N-methyltransferase that trimethylates adenine nucleotide translocases ANT2/SLC25A5 and ANT3/SLC25A6, thereby regulating mitochondrial respiration. Probably also trimethylates ANT1/SLC25A4. This chain is Adenine nucleotide translocase lysine N-methyltransferase, found in Mus musculus (Mouse).